The sequence spans 822 residues: Putative pentatricopeptide repeat-containing protein At5g13230, mitochondrial (822 aa).

Residues 1-70 constitute a mitochondrion transit peptide; it reads MIVFMRIIHV…QKNDPISAKA (70 aa). PPR repeat units lie at residues 48-82, 83-117, 145-179, 180-210, 211-245, 246-280, 281-311, 312-346, 347-381, 382-416, 417-447, 448-482, 483-513, 514-548, 549-584, and 585-619; these read DSHA…GSCL, DLFA…NNVS, NPHV…GYDS, NAFV…ILCK, DIVV…GFMP, NNYT…CYVL, DPRV…MPKN, DVVP…FVVP, NEFT…GFDL, DIYV…NEVS, WNTV…QVSV, TEVT…NNAK, KVAV…METI, DVAS…DCKP, NGLT…GIEP, and CLEH…PSVM. The tract at residues 620–695 is type E motif; the sequence is IWRAMLSASM…EPGLSWIEHQ (76 aa). The segment at 696-726 is type E(+) motif; that stretch reads GDVHYFSVGLSDHPDMKLINGMLEWLNMKAT. Residues 727–822 form a type DYW motif region; it reads RAGYVPDRNA…AGVCSCGDHW (96 aa).

It belongs to the PPR family. PCMP-H subfamily.

It localises to the mitochondrion. The polypeptide is Putative pentatricopeptide repeat-containing protein At5g13230, mitochondrial (PCMP-H89) (Arabidopsis thaliana (Mouse-ear cress)).